A 108-amino-acid chain; its full sequence is uncharacterized protein (108 aa).

An N-terminal signal peptide occupies residues 1 to 21 (MFRSLFLAAALMAFTPLAANA).

To E.coli YaaX.

This is an uncharacterized protein from Escherichia coli O157:H7.